We begin with the raw amino-acid sequence, 200 residues long: Rubrerythrin (200 aa).

The Ferritin-like diiron domain occupies 12–155 (SIKGSKTEKH…ALLAHVEDGS (144 aa)). Fe(3+) is bound by residues glutamate 29, glutamate 62, glutamate 103, glutamate 106, glutamate 137, histidine 140, cysteine 167, cysteine 170, cysteine 183, and cysteine 186. The 39-residue stretch at 162 to 200 (EIAWQCRNCGYVITSKKAPKLCPACAHPQAYFEPMKTNY) folds into the Rubredoxin-like domain.

As to quaternary structure, homodimer. Possesses two rubredoxin-like centers and two non-sulfur oxo-bridged di-iron centers per dimer. Fe(3+) is required as a cofactor.

The protein localises to the cytoplasm. Functionally, may provide oxidative stress protection via catalytic reduction of intracellular hydrogen peroxide. The sequence is that of Rubrerythrin (rbr) from Porphyromonas gingivalis (strain ATCC BAA-308 / W83).